The following is a 180-amino-acid chain: Large ribosomal subunit protein uL6 (180 aa).

This sequence belongs to the universal ribosomal protein uL6 family. As to quaternary structure, part of the 50S ribosomal subunit.

Its function is as follows. This protein binds to the 23S rRNA, and is important in its secondary structure. It is located near the subunit interface in the base of the L7/L12 stalk, and near the tRNA binding site of the peptidyltransferase center. This chain is Large ribosomal subunit protein uL6, found in Clostridium botulinum (strain 657 / Type Ba4).